We begin with the raw amino-acid sequence, 148 residues long: Small ribosomal subunit protein uS7c (148 aa).

This sequence belongs to the universal ribosomal protein uS7 family. Part of the 30S ribosomal subunit.

The protein localises to the plastid. The protein resides in the chloroplast. Functionally, one of the primary rRNA binding proteins, it binds directly to 16S rRNA where it nucleates assembly of the head domain of the 30S subunit. The chain is Small ribosomal subunit protein uS7c (rps7) from Cyanidioschyzon merolae (strain NIES-3377 / 10D) (Unicellular red alga).